A 448-amino-acid polypeptide reads, in one-letter code: SVP1-like protein 2 (448 aa).

Residues Asn-61, Asn-155, Asn-256, Asn-280, Asn-315, and Asn-421 are each glycosylated (N-linked (GlcNAc...) asparagine). WD repeat units lie at residues 222-262 and 267-306; these read AHKN…LIKE and VDKA…NTET. Residues 416 to 435 are disordered; it reads THYSLNESLRNEDTKSAGEP. The span at 424–435 shows a compositional bias: basic and acidic residues; that stretch reads LRNEDTKSAGEP.

It belongs to the WD repeat PROPPIN family. N-glycosylated.

It is found in the endosome membrane. The protein localises to the prevacuolar compartment membrane. In terms of biological role, involved in piecemeal microautophagy of the nucleus (micronucleophagy). In Saccharomyces cerevisiae (strain ATCC 204508 / S288c) (Baker's yeast), this protein is SVP1-like protein 2 (HSV2).